The following is a 235-amino-acid chain: Thiamine-phosphate synthase (235 aa).

Residues 50–54 and N91 each bind 4-amino-2-methyl-5-(diphosphooxymethyl)pyrimidine; that span reads QLRDK. D92 and D111 together coordinate Mg(2+). 4-amino-2-methyl-5-(diphosphooxymethyl)pyrimidine is bound at residue S130. 160–162 is a 2-[(2R,5Z)-2-carboxy-4-methylthiazol-5(2H)-ylidene]ethyl phosphate binding site; that stretch reads TPT. K163 serves as a coordination point for 4-amino-2-methyl-5-(diphosphooxymethyl)pyrimidine. A 2-[(2R,5Z)-2-carboxy-4-methylthiazol-5(2H)-ylidene]ethyl phosphate-binding site is contributed by G191.

It belongs to the thiamine-phosphate synthase family. Mg(2+) is required as a cofactor.

It catalyses the reaction 2-[(2R,5Z)-2-carboxy-4-methylthiazol-5(2H)-ylidene]ethyl phosphate + 4-amino-2-methyl-5-(diphosphooxymethyl)pyrimidine + 2 H(+) = thiamine phosphate + CO2 + diphosphate. The enzyme catalyses 2-(2-carboxy-4-methylthiazol-5-yl)ethyl phosphate + 4-amino-2-methyl-5-(diphosphooxymethyl)pyrimidine + 2 H(+) = thiamine phosphate + CO2 + diphosphate. It carries out the reaction 4-methyl-5-(2-phosphooxyethyl)-thiazole + 4-amino-2-methyl-5-(diphosphooxymethyl)pyrimidine + H(+) = thiamine phosphate + diphosphate. It participates in cofactor biosynthesis; thiamine diphosphate biosynthesis; thiamine phosphate from 4-amino-2-methyl-5-diphosphomethylpyrimidine and 4-methyl-5-(2-phosphoethyl)-thiazole: step 1/1. Its function is as follows. Condenses 4-methyl-5-(beta-hydroxyethyl)thiazole monophosphate (THZ-P) and 2-methyl-4-amino-5-hydroxymethyl pyrimidine pyrophosphate (HMP-PP) to form thiamine monophosphate (TMP). The chain is Thiamine-phosphate synthase from Mycobacterium leprae (strain TN).